The primary structure comprises 404 residues: Putative CBL-interacting protein kinase 27 (404 aa).

Residues 11–266 (YEMGRVLGHG…VAGLLETPWF (256 aa)) enclose the Protein kinase domain. ATP is bound by residues 17–25 (LGHGNFGRV) and Lys40. Asp134 acts as the Proton acceptor in catalysis. Residues 152–181 (DFGLSALACHARPDGLLHTACGTPAYVAPE) are activation loop. One can recognise an NAF domain in the interval 294 to 321 (DKDEPPEVLNAFHLISLSEGFDLSPLFE). A PPI region spans residues 335-356 (AGGTRFATREAASGVVARLEAL).

Belongs to the protein kinase superfamily. CAMK Ser/Thr protein kinase family. SNF1 subfamily. The cofactor is Mn(2+).

It catalyses the reaction L-seryl-[protein] + ATP = O-phospho-L-seryl-[protein] + ADP + H(+). The catalysed reaction is L-threonyl-[protein] + ATP = O-phospho-L-threonyl-[protein] + ADP + H(+). Functionally, CIPK serine-threonine protein kinases interact with CBL proteins. Binding of a CBL protein to the regulatory NAF domain of CIPK protein lead to the activation of the kinase in a calcium-dependent manner. This chain is Putative CBL-interacting protein kinase 27 (CIPK27), found in Oryza sativa subsp. japonica (Rice).